The chain runs to 306 residues: tRNA-cytidine(32) 2-sulfurtransferase (306 aa).

Residues 49-54 (SGGKDS) carry the PP-loop motif motif. The [4Fe-4S] cluster site is built by Cys-124, Cys-127, and Cys-215.

It belongs to the TtcA family. Homodimer. It depends on Mg(2+) as a cofactor. The cofactor is [4Fe-4S] cluster.

It is found in the cytoplasm. The enzyme catalyses cytidine(32) in tRNA + S-sulfanyl-L-cysteinyl-[cysteine desulfurase] + AH2 + ATP = 2-thiocytidine(32) in tRNA + L-cysteinyl-[cysteine desulfurase] + A + AMP + diphosphate + H(+). It functions in the pathway tRNA modification. In terms of biological role, catalyzes the ATP-dependent 2-thiolation of cytidine in position 32 of tRNA, to form 2-thiocytidine (s(2)C32). The sulfur atoms are provided by the cysteine/cysteine desulfurase (IscS) system. The protein is tRNA-cytidine(32) 2-sulfurtransferase of Azoarcus sp. (strain BH72).